The sequence spans 503 residues: UDP-N-acetylmuramate--L-alanine ligase (503 aa).

ATP is bound at residue 120 to 126 (GTHGKTS).

It belongs to the MurCDEF family.

The protein localises to the cytoplasm. The enzyme catalyses UDP-N-acetyl-alpha-D-muramate + L-alanine + ATP = UDP-N-acetyl-alpha-D-muramoyl-L-alanine + ADP + phosphate + H(+). It participates in cell wall biogenesis; peptidoglycan biosynthesis. In terms of biological role, cell wall formation. In Rhodococcus jostii (strain RHA1), this protein is UDP-N-acetylmuramate--L-alanine ligase.